A 382-amino-acid polypeptide reads, in one-letter code: Heme A synthase (382 aa).

7 helical membrane passes run 37–57 (IRVW…VGGL), 126–146 (VIGV…QVPA), 152–172 (LLFL…MVAS), 188–208 (LATH…YIME), 231–251 (STGL…VAGI), 288–308 (LVQF…VVVW), and 332–352 (LQIV…IAIF). Heme is bound at residue His293. Residue His353 participates in heme binding. Residues 356–376 (LAVIVWVLILRARFLSGYPIA) form a helical membrane-spanning segment.

Belongs to the COX15/CtaA family. Type 2 subfamily. As to quaternary structure, interacts with CtaB. Requires heme b as cofactor.

Its subcellular location is the cell membrane. It catalyses the reaction Fe(II)-heme o + 2 A + H2O = Fe(II)-heme a + 2 AH2. The protein operates within porphyrin-containing compound metabolism; heme A biosynthesis; heme A from heme O: step 1/1. Catalyzes the conversion of heme O to heme A by two successive hydroxylations of the methyl group at C8. The first hydroxylation forms heme I, the second hydroxylation results in an unstable dihydroxymethyl group, which spontaneously dehydrates, resulting in the formyl group of heme A. This is Heme A synthase from Roseobacter denitrificans (strain ATCC 33942 / OCh 114) (Erythrobacter sp. (strain OCh 114)).